Consider the following 317-residue polypeptide: MGLCKCPKKKVTNLFCFKHRVNVCEHCLVSNHNKCIVQSYLQWLQDSDYNPNCSLCIQPLDSQDTVRLVCYDLFHWSCLNELASHQPLNTAPDGYQCPTCQGPVFPPRNLASPVADMLREQLSSVNWARAGLGLPLIEDPEEEETTTHSGTSFSEWSTFETTSVDVSMSNPTLTSLPPHQDGEHIYNNREQSAPNNTVFNMVTTSATDTVTISTVTSPRKLYDTRDLGHSAVMQIDFDDDKYRRRPALNWFAQVLKNCTSTKKKTLALKHRIFLLLLFGVIGFFTLIIIMAKFGRASAETDPNLDPLLNPNIRIGNM.

The B box-type; degenerate zinc finger occupies 1 to 43 (MGLCKCPKKKVTNLFCFKHRVNVCEHCLVSNHNKCIVQSYLQW). At 1–271 (MGLCKCPKKK…KKKTLALKHR (271 aa)) the chain is on the cytoplasmic side. Residues 53–101 (CSLCIQPLDSQDTVRLVCYDLFHWSCLNELASHQPLNTAPDGYQCPTCQ) form an RING-type; degenerate zinc finger. Residues 272–292 (IFLLLLFGVIGFFTLIIIMAK) form a helical membrane-spanning segment. Over 293 to 317 (FGRASAETDPNLDPLLNPNIRIGNM) the chain is Lumenal.

This sequence belongs to the ZFPL1 family.

The protein resides in the golgi apparatus. It localises to the cis-Golgi network membrane. Required for cis-Golgi integrity and efficient ER to Golgi transport. The sequence is that of Zinc finger protein-like 1 (zfpl1) from Danio rerio (Zebrafish).